The sequence spans 304 residues: Protease HtpX homolog 1 (304 aa).

A run of 2 helical transmembrane segments spans residues 17–37 and 39–59; these read VTLFLLGLLYVGFVAALIALL and SWVLVVVIVALVFGAQYWFSD. Residue histidine 140 coordinates Zn(2+). Residue glutamate 141 is part of the active site. Histidine 144 lines the Zn(2+) pocket. A run of 2 helical transmembrane segments spans residues 151–171 and 186–206; these read AVITVASFLGVIAGLIVRFAF and AVLAVVMGVSAAVYALSFLLI. Zn(2+) is bound at residue glutamate 214.

This sequence belongs to the peptidase M48B family. Requires Zn(2+) as cofactor.

Its subcellular location is the cell membrane. This chain is Protease HtpX homolog 1, found in Streptomyces coelicolor (strain ATCC BAA-471 / A3(2) / M145).